The sequence spans 181 residues: Protein Syd (181 aa).

Belongs to the Syd family.

It localises to the cell inner membrane. Functionally, interacts with the SecY protein in vivo. May bind preferentially to an uncomplexed state of SecY, thus functioning either as a chelating agent for excess SecY in the cell or as a regulatory factor that negatively controls the translocase function. The chain is Protein Syd from Escherichia coli O17:K52:H18 (strain UMN026 / ExPEC).